The sequence spans 161 residues: Small ribosomal subunit protein uS9 (161 aa).

Residues 1-21 show a composition bias toward polar residues; that stretch reads MATLQSLADLNRANTQTSNPE. The tract at residues 1 to 25 is disordered; the sequence is MATLQSLADLNRANTQTSNPENEAP.

This sequence belongs to the universal ribosomal protein uS9 family.

The polypeptide is Small ribosomal subunit protein uS9 (Methylorubrum extorquens (strain CM4 / NCIMB 13688) (Methylobacterium extorquens)).